A 221-amino-acid chain; its full sequence is Protein lethal(2)k10201 (221 aa).

2 consecutive C2H2-type zinc fingers follow at residues 74–97 (YSCVECRKMLPTAHLLDLHITEQH) and 113–138 (FSCFLEECTIKFHTARQRKDHCIITH). Residues 146 to 168 (FDHSKNRGKQKHQGKSKPNSMEV) form a disordered region. The segment covering 151–160 (NRGKQKHQGK) has biased composition (basic residues).

Vital for development. This Drosophila melanogaster (Fruit fly) protein is Protein lethal(2)k10201 (l(2)k10201).